The primary structure comprises 431 residues: Histidinol dehydrogenase (431 aa).

Residues tyrosine 130, glutamine 192, and asparagine 215 each coordinate NAD(+). Substrate contacts are provided by serine 238, glutamine 260, and histidine 263. Residues glutamine 260 and histidine 263 each contribute to the Zn(2+) site. Catalysis depends on proton acceptor residues glutamate 328 and histidine 329. Substrate-binding residues include histidine 329, aspartate 362, glutamate 416, and histidine 421. Aspartate 362 contributes to the Zn(2+) binding site. Histidine 421 is a binding site for Zn(2+).

This sequence belongs to the histidinol dehydrogenase family. The cofactor is Zn(2+).

It carries out the reaction L-histidinol + 2 NAD(+) + H2O = L-histidine + 2 NADH + 3 H(+). The protein operates within amino-acid biosynthesis; L-histidine biosynthesis; L-histidine from 5-phospho-alpha-D-ribose 1-diphosphate: step 9/9. Its function is as follows. Catalyzes the sequential NAD-dependent oxidations of L-histidinol to L-histidinaldehyde and then to L-histidine. The polypeptide is Histidinol dehydrogenase (Thermosynechococcus vestitus (strain NIES-2133 / IAM M-273 / BP-1)).